A 68-amino-acid chain; its full sequence is Antimicrobial peptide Eval418 (68 aa).

A signal peptide spans 1–23 (MRTQLAVLLVALVLLQMIAQSEA). An Isoleucine amide modification is found at I36. Residues 37–68 (GKRGLRNLDDLDDVFDDDLSAADLEFLKQLMR) constitute a propeptide that is removed on maturation.

It belongs to the non-disulfide-bridged peptide (NDBP) superfamily. Short antimicrobial peptide (group 4) family. In terms of tissue distribution, expressed by the venom gland.

The protein resides in the secreted. Its function is as follows. Probable antimicrobial peptide. Shows dose-dependent and time-dependent inactivation of herpes simplex virus type 1 (HSV-1) and dose-dependent inhibition of HSV-1 viral attachment to host cells. Scarcely suppress an established HSV-1 infection due to poor cellular uptake. This chain is Antimicrobial peptide Eval418, found in Euscorpiops validus (Scorpion).